The chain runs to 439 residues: Actin-related protein 3 (439 aa).

The disordered stretch occupies residues Pro-40–Leu-71.

Belongs to the actin family. ARP3 subfamily. As to quaternary structure, component of the Arp2/3 complex composed.

Its subcellular location is the cytoplasm. It localises to the cytoskeleton. Its function is as follows. Functions as ATP-binding component of the Arp2/3 complex which is involved in regulation of actin polymerization and together with an activating nucleation-promoting factor (NPF) mediates the formation of branched actin networks. Seems to contact the pointed end of the daughter actin filament. The polypeptide is Actin-related protein 3 (arp-3) (Neurospora crassa (strain ATCC 24698 / 74-OR23-1A / CBS 708.71 / DSM 1257 / FGSC 987)).